The sequence spans 349 residues: PhoH-like protein (349 aa).

An ATP-binding site is contributed by 147–154 (GPAGTGKT).

This sequence belongs to the PhoH family.

It localises to the cytoplasm. The protein is PhoH-like protein of Mycobacterium leprae (strain TN).